The following is a 262-amino-acid chain: CD99 antigen-like protein 2 (262 aa).

Positions 1-25 (MVAWRSAFLVCLAFSLATLVQRGSG) are cleaved as a signal peptide. Residues 26–185 (DFDDFNLEDA…PGSGMVAEPG (160 aa)) are Extracellular-facing. Residues 38 to 181 (ETSSVKQPWD…SNDDPGSGMV (144 aa)) are disordered. Low complexity-rich tracts occupy residues 49–60 (TTTTTTNRPGTT) and 98–119 (VTTT…GNDF). Basic and acidic residues-rich tracts occupy residues 125-136 (LDDRNDRDDGRR) and 159-168 (YKPDKGKGDG). Ser178 carries O-linked (Xyl...) (chondroitin sulfate) serine glycosylation. The chain crosses the membrane as a helical span at residues 186 to 206 (TIAGVASALAMALIGAVSSYI). At 207–262 (SYQQKKFCFSIQQGLNADYVKGENLEAVVCEEPQVKYSTLHTQSAEPPPPPEPARI) the chain is on the cytoplasmic side.

It belongs to the CD99 family. O-glycosylated. As to expression, detected in cerebrospinal fluid (at protein level). Expressed in many tissues, with low expression in thymus.

It is found in the cell membrane. Its subcellular location is the cell junction. It localises to the secreted. Functionally, plays a role in a late step of leukocyte extravasation helping cells to overcome the endothelial basement membrane. Acts at the same site as, but independently of, PECAM1. Homophilic adhesion molecule, but these interactions may not be required for cell aggregation. This is CD99 antigen-like protein 2 (CD99L2) from Homo sapiens (Human).